The chain runs to 425 residues: Divalent metal cation transporter MntH (425 aa).

The next 11 membrane-spanning stretches (helical) occupy residues 30 to 50 (LLPF…PGNF), 61 to 81 (GYML…IQSL), 107 to 127 (IGLW…EFIG), 134 to 154 (LLFG…SFAI), 167 to 187 (AGIA…TFFA), 209 to 231 (VLLA…HSAL), 255 to 275 (ILIA…VAAA), 294 to 314 (FGHL…LVAG), 344 to 364 (FITI…TTAL), 365 to 385 (VLSQ…LIMF), and 401 to 421 (ITVV…FLIV).

It belongs to the NRAMP family.

The protein resides in the cell membrane. Its function is as follows. H(+)-stimulated, divalent metal cation uptake system. Involved in manganese uptake. Can probably also transport cadmium, cobalt, copper and zinc, but not iron. May be the predominant transporter of manganese during logarithmic phase growth. The polypeptide is Divalent metal cation transporter MntH (Bacillus subtilis (strain 168)).